We begin with the raw amino-acid sequence, 1159 residues long: CRISPR-associated endoribonuclease Cas13a (1159 aa).

Residues 1–11 (MKVTKVGGISH) form a binds crRNA repeat and spacer region. The interval 1–170 (MKVTKVGGIS…NNIEKVEGKS (170 aa)) is NTD. Binds crRNA repeat regions lie at residues 139–151 (NKINSLKYSFEKN), 172–176 (RNIIY), 224–233 (REFYHEIIGR), 271–276 (QVFYKY), 294–297 (HFVE), and 301–305 (SQLLK). A helical-1 region spans residues 171–360 (KRNIIYDYYR…YNYYLQDGEI (190 aa)). The segment at 319–328 (KIKRIFEYQN) is binds crRNA processing site. Binds crRNA repeat regions lie at residues 336–340 (KLLNK) and 371–378 (QNEAFLRN). The segment at 361–508 (ATSDFIARNR…SKKMFQNEIN (148 aa)) is HEPN-like fold 1-I. Catalysis depends on for target RNA cleavage residues arginine 472 and histidine 477. A helical-2 region spans residues 509–751 (EKKLKLKIFR…EFLREIKLGN (243 aa)). The binds target RNA stretch occupies residues 519 to 522 (QLNS). The interval 547-558 (NKNIPFVPSFTK) is binds crRNA spacer. The interval 590–597 (DAQIYLLK) is binds target RNA. Residues 718–722 (KQEFD) are binds crRNA spacer. The interval 752–813 (ILKYTERLNM…NLDNNRVTED (62 aa)) is HEPN-like fold 1-II. The interval 780–783 (SLEK) is binds crRNA repeat. Residues 804-810 (NLDNNRV) form a binds crRNA spacer and target RNA region. The segment at 814–946 (FELEADEIGK…EYTHLKNKVE (133 aa)) is linker. 2 binds crRNA spacer regions span residues 845-857 (KIYFDGENIIKHR) and 938-942 (YTHLK). Residues 880-946 (YKISIEELKK…EYTHLKNKVE (67 aa)) are a coiled coil. The interval 947 to 1159 (FNELNLLQGL…YKMEEKKSEN (213 aa)) is HEPN-like fold 2. Positions 962-963 (HR) are binds crRNA repeat. The interval 995 to 998 (FENK) is binds 3'-end of target RNA, in adjacent protein. Residues arginine 1048 and histidine 1053 each act as for target RNA cleavage in the active site. Binds crRNA processing site regions lie at residues 1072-1082 (RKLLSYDRKLK) and 1104-1108 (IGADK).

Belongs to the CRISPR-associated endoribonuclease Cas13a family. Crystals show the 3'-end of target RNA interacting with an adjacent protein molecule, and mutagenesis of those amino acid residues decreases target RNA cleavage, but it is not clear if this is physiological. The cofactor is a divalent metal cation.

With respect to regulation, target RNA acts as an activator for non-specific ssRNA cleavage; the target RNA and complementary crRNA must both be at least 20 nucleotides long to activate the HEPN-like catalytic pocket for RNase activity. Its function is as follows. CRISPR (clustered regularly interspaced short palindromic repeat), is an adaptive immune system that provides protection against mobile genetic elements (viruses, transposable elements and conjugative plasmids). CRISPR clusters contain sequences complementary to antecedent mobile elements (spacer sequences) and target invading nucleic acids. Unlike many single-component effectors, this CRISPR-Cas system targets RNA. CRISPR clusters are transcribed from pre-CRISPR RNA (crRNA) and processed into crRNA by this protein. pre-crRNA processing yields a 5'-OH and probably a 2',3'-cyclic phosphate. Also cleaves pre-crRNA from several other type VI-A CRISPR systems. Cleaves linear target ssRNA in a crRNA-dependent fashion, preferentially before U residues. Cleavage of target ssRNA is about 80-fold faster than pre-crRNA processing and uses a different active site. Binding a viable target RNA target activates this protein for non-specific RNA degradation in vitro (called collateral RNA degradation). Activation occurs with 10 fM target RNA. crRNA maturation is not essential for activation of RNA degradation, but lack of mature crRNA (due to mutagenesis) decreases activation levels. This system has a 3' protospacer flanking site in the target RNA (PFS), which is C and unavailable to base pair with crRNA (PFS is equivalent to PAM, the protospacer adjacent motif). The sequence is that of CRISPR-associated endoribonuclease Cas13a from Leptotrichia buccalis (strain ATCC 14201 / DSM 1135 / JCM 12969 / NCTC 10249 / C-1013-b).